Here is a 290-residue protein sequence, read N- to C-terminus: GTPase Era (290 aa).

Positions 2-169 (KSGFAAILGR…KNKIYENFSE (168 aa)) constitute an Era-type G domain. Residues 10–17 (GRPSTGKS) form a G1 region. 10-17 (GRPSTGKS) contacts GTP. The G2 stretch occupies residues 36-40 (QTTRN). The segment at 57–60 (DTPG) is G3. GTP contacts are provided by residues 57–61 (DTPGF) and 119–122 (NKVD). The interval 119-122 (NKVD) is G4. The segment at 148 to 150 (ISA) is G5. The region spanning 200-276 (LKEELPYSLY…NLFLQVKLKK (77 aa)) is the KH type-2 domain.

The protein belongs to the TRAFAC class TrmE-Era-EngA-EngB-Septin-like GTPase superfamily. Era GTPase family. Monomer.

It localises to the cytoplasm. The protein localises to the cell inner membrane. An essential GTPase that binds both GDP and GTP, with rapid nucleotide exchange. Plays a role in 16S rRNA processing and 30S ribosomal subunit biogenesis and possibly also in cell cycle regulation and energy metabolism. The sequence is that of GTPase Era from Borrelia garinii subsp. bavariensis (strain ATCC BAA-2496 / DSM 23469 / PBi) (Borreliella bavariensis).